A 198-amino-acid chain; its full sequence is Large ribosomal subunit protein eL18 (198 aa).

Residues 157–198 form a disordered region; sequence RHFGASGVPGSHSKPYATNRGKETKRGRRTGRSYKRKAFRHV. A compositionally biased stretch (basic residues) spans 179–198; the sequence is ETKRGRRTGRSYKRKAFRHV.

The protein belongs to the eukaryotic ribosomal protein eL18 family.

The protein resides in the cytoplasm. This Leishmania major protein is Large ribosomal subunit protein eL18 (RPL18-A).